The sequence spans 265 residues: 5'-nucleotidase SurE (265 aa).

Residues Asp-8, Asp-9, Ser-39, and Asn-96 each contribute to the a divalent metal cation site.

The protein belongs to the SurE nucleotidase family. The cofactor is a divalent metal cation.

It localises to the cytoplasm. It carries out the reaction a ribonucleoside 5'-phosphate + H2O = a ribonucleoside + phosphate. In terms of biological role, nucleotidase that shows phosphatase activity on nucleoside 5'-monophosphates. This chain is 5'-nucleotidase SurE, found in Dehalococcoides mccartyi (strain ATCC BAA-2266 / KCTC 15142 / 195) (Dehalococcoides ethenogenes (strain 195)).